The following is a 154-amino-acid chain: Regulatory protein RecX (154 aa).

This sequence belongs to the RecX family.

The protein localises to the cytoplasm. In terms of biological role, modulates RecA activity. The protein is Regulatory protein RecX of Trichlorobacter lovleyi (strain ATCC BAA-1151 / DSM 17278 / SZ) (Geobacter lovleyi).